The following is a 266-amino-acid chain: Vitamin B12-binding protein (266 aa).

A signal peptide spans 1–22 (MAKQMFRALVALLLTLPVWLYA). The Fe/B12 periplasmic-binding domain occupies 25 to 266 (RVITLSPANT…QLCNALSQVN (242 aa)). Residues Tyr-50 and 242–246 (DWFER) each bind cyanocob(III)alamin. A disulfide bond links Cys-183 and Cys-259.

Belongs to the BtuF family. In terms of assembly, the complex is composed of two ATP-binding proteins (BtuD), two transmembrane proteins (BtuC) and a solute-binding protein (BtuF).

It localises to the periplasm. Its function is as follows. Part of the ABC transporter complex BtuCDF involved in vitamin B12 import. Binds vitamin B12 and delivers it to the periplasmic surface of BtuC. The polypeptide is Vitamin B12-binding protein (Salmonella paratyphi A (strain ATCC 9150 / SARB42)).